A 161-amino-acid chain; its full sequence is Putative acetyltransferase SAR0816 (161 aa).

This sequence belongs to the transferase hexapeptide repeat family.

In Staphylococcus aureus (strain MRSA252), this protein is Putative acetyltransferase SAR0816.